Reading from the N-terminus, the 741-residue chain is Oosporein cluster regulator OpS3 (741 aa).

The tract at residues 16–39 (GRPARGQSTTTRSRNTQQSAPTSQ) is disordered. Positions 20 to 34 (RGQSTTTRSRNTQQS) are enriched in low complexity. The zn(2)-C6 fungal-type DNA-binding region spans 44–69 (CRRCRQHRIKCSEKPCEPCRANNSKC). A disordered region spans residues 139 to 167 (HPNTPNSCPSQSGDIRQQQIPCSQHASPA). Positions 473 to 500 (TAGQSMARLSETIRQLETALDELPEQLL) form a coiled coil. The interval 501 to 528 (TRHGSRTPTNNGQTHRSRPTCSTMPHTN) is disordered. The span at 506-528 (RTPTNNGQTHRSRPTCSTMPHTN) shows a compositional bias: polar residues.

The protein localises to the nucleus. In terms of biological role, transcription factor involved in regulation of gene cluster that mediates the biosynthesis of oosporein, a metabolite required for fungal virulence that acts by evading host immunity to facilitate fungal multiplication in insects. Binds oosporein cluster genes at a conserved 5'-CGGA-3' motif with the exception of OpS5. The presence of this motif in the OpS3 promoter would suggest the formation of a positive feedback loop for self-activation. This is Oosporein cluster regulator OpS3 from Beauveria bassiana (strain ARSEF 2860) (White muscardine disease fungus).